Consider the following 140-residue polypeptide: Nucleoside diphosphate kinase (140 aa).

ATP-binding residues include lysine 11, phenylalanine 59, arginine 87, threonine 93, arginine 104, and asparagine 114. The active-site Pros-phosphohistidine intermediate is histidine 117.

This sequence belongs to the NDK family. As to quaternary structure, homotetramer. The cofactor is Mg(2+).

It localises to the cytoplasm. It catalyses the reaction a 2'-deoxyribonucleoside 5'-diphosphate + ATP = a 2'-deoxyribonucleoside 5'-triphosphate + ADP. The catalysed reaction is a ribonucleoside 5'-diphosphate + ATP = a ribonucleoside 5'-triphosphate + ADP. Functionally, major role in the synthesis of nucleoside triphosphates other than ATP. The ATP gamma phosphate is transferred to the NDP beta phosphate via a ping-pong mechanism, using a phosphorylated active-site intermediate. The chain is Nucleoside diphosphate kinase from Rhizobium johnstonii (strain DSM 114642 / LMG 32736 / 3841) (Rhizobium leguminosarum bv. viciae).